Consider the following 654-residue polypeptide: WD repeat-containing protein 70 (654 aa).

Disordered stretches follow at residues 1–26 (MERSGPSEVTGSDASGPDPQLAVTMG) and 43–175 (FEQT…DSHE). Residues 45–78 (QTRRTAVERSRKTLEAREKEEEMNREKELRRQNE) show a composition bias toward basic and acidic residues. Low complexity predominate over residues 99-111 (RDTSSSESEQSSD). The span at 147–164 (NEEEEEAEEEEEEEEEEE) shows a compositional bias: acidic residues. Over residues 165 to 175 (NPVHKIPDSHE) the composition is skewed to basic and acidic residues. WD repeat units lie at residues 180-219 (HGTKTVSALGLDPSGARLVTGGYDYDVKFWDFAGMDASFK), 227-268 (CECH…ECIK), 281-321 (GHTA…KQKS), 330-369 (GKKVIPTTCTYSRDGNLIAAACQNGSIQIWDRNLTVHPKF), 376-415 (DSGTDTSCVTFSYDGNVLASRGGDDSLKLWDIRQFNKPLF), 421-466 (PTMF…RVYE), and 469-508 (ITDASVVRCLWHPKLNQIMVGTGNGLAKVYYDPNKSQRGA). Lys296 participates in a covalent cross-link: Glycyl lysine isopeptide (Lys-Gly) (interchain with G-Cter in SUMO2). Lys452 bears the N6-acetyllysine mark. Over residues 540-565 (REPRQRSTRKQLEKDRLDPLKSHKPE) the composition is skewed to basic and acidic residues. A disordered region spans residues 540–579 (REPRQRSTRKQLEKDRLDPLKSHKPEPPVAGPGRGGRVGT). Thr579 is subject to Phosphothreonine. Glycyl lysine isopeptide (Lys-Gly) (interchain with G-Cter in SUMO2) cross-links involve residues Lys590 and Lys596. Residues Ser621 and Ser638 each carry the phosphoserine modification. A disordered region spans residues 630–654 (KTMFAQVESDDEEAKNEPEWKKRKI). Residues 644-654 (KNEPEWKKRKI) are compositionally biased toward basic and acidic residues.

The protein belongs to the WD repeat GAD-1 family.

This is WD repeat-containing protein 70 (WDR70) from Homo sapiens (Human).